Consider the following 1099-residue polypeptide: Zinc finger protein basonuclin-2 (1099 aa).

A disordered region spans residues 45–66 (EEAEVDVRERETQRDREPKRAR). Over residues 49–66 (VDVRERETQRDREPKRAR) the composition is skewed to basic and acidic residues. Residue Lys277 forms a Glycyl lysine isopeptide (Lys-Gly) (interchain with G-Cter in SUMO2) linkage. Residues 357–385 (LSTQNEYNESSESEVSPTPYKNDQTPNRN) form a disordered region. The segment covering 361–372 (NEYNESSESEVS) has biased composition (low complexity). The segment covering 375–385 (PYKNDQTPNRN) has biased composition (polar residues). Residues Lys396, Lys416, and Lys421 each participate in a glycyl lysine isopeptide (Lys-Gly) (interchain with G-Cter in SUMO2) cross-link. The tract at residues 397–423 (TEPACVSPIQNSAPVSDLTKTEHPKSS) is disordered. Residues 441-464 (VFCNACGKTFYDKGTLKIHYNAVH) form a C2H2-type 1 zinc finger. Ser561 carries the phosphoserine modification. 2 disordered regions span residues 622 to 641 (EPSA…MPVK) and 648 to 742 (DTAD…EGDE). Lys641 is covalently cross-linked (Glycyl lysine isopeptide (Lys-Gly) (interchain with G-Cter in SUMO2)). Residues 648–661 (DTADEFDDEDDDPN) are compositionally biased toward acidic residues. Basic and acidic residues-rich tracts occupy residues 670-680 (MSHDNHCHSQE) and 719-742 (ERDY…EGDE). The C2H2-type 2 zinc-finger motif lies at 833-856 (KICYVCKKSFKSSYSVKLHYRNVH). Residues Lys894 and Lys919 each participate in a glycyl lysine isopeptide (Lys-Gly) (interchain with G-Cter in SUMO2) cross-link. Disordered stretches follow at residues 929–948 (LDVR…HLNG) and 968–1008 (LQSS…KAEA). The span at 982–995 (AGSDEGILLDDIDG) shows a compositional bias: acidic residues. 2 C2H2-type zinc fingers span residues 1035-1058 (IMCN…KTVH) and 1063-1090 (HKCK…PNLH). Positions 1079 to 1099 (SRNRHSQNPNLHKNIPFTSVD) are disordered.

As to expression, highly expressed in testis, uterus and small intestine, and weakly expressed in colon and prostate. Also expressed in skin, primary keratinocytes, immortalized keratinocytes, and HeLa and HEK293 cells. Not detected in blood, thymus, spleen or Hep-G2 cells.

Its subcellular location is the nucleus. In terms of biological role, probable transcription factor specific for skin keratinocytes. May play a role in the differentiation of spermatozoa and oocytes. May also play an important role in early urinary-tract development. The polypeptide is Zinc finger protein basonuclin-2 (Homo sapiens (Human)).